The following is a 499-amino-acid chain: Endoglucanase 3 (499 aa).

The first 19 residues, 1 to 19, serve as a signal peptide directing secretion; that stretch reads MALLRCLFLLAVLLPHRNA. The active-site Nucleophile is the aspartate 88. Catalysis depends on residues histidine 416, aspartate 467, and glutamate 476.

This sequence belongs to the glycosyl hydrolase 9 (cellulase E) family. As to expression, expressed in flowers.

Its subcellular location is the secreted. The enzyme catalyses Endohydrolysis of (1-&gt;4)-beta-D-glucosidic linkages in cellulose, lichenin and cereal beta-D-glucans.. This chain is Endoglucanase 3 (GLU8), found in Oryza sativa subsp. japonica (Rice).